Reading from the N-terminus, the 375-residue chain is Killer cell immunoglobulin-like receptor 2DL5A (375 aa).

The N-terminal stretch at 1–21 is a signal peptide; sequence MSLMVISMACVGFFLLQGAWT. Over 22–238 the chain is Extracellular; sequence HEGGQDKPLL…PSSKTGIRRH (217 aa). Ig-like C2-type domains lie at 42-102 and 137-200; these read GGHV…HPRS and GENV…LHDS. Cysteine 49 and cysteine 95 are disulfide-bonded. 3 N-linked (GlcNAc...) asparagine glycosylation sites follow: asparagine 139, asparagine 173, and asparagine 218. An intrachain disulfide couples cysteine 144 to cysteine 193. Positions 213–233 are disordered; sequence VSVTGNSSSSSSSPTEPSSKT. Residues 219-231 show a composition bias toward low complexity; that stretch reads SSSSSSSPTEPSS. The chain crosses the membrane as a helical span at residues 239–259; the sequence is LHILIGTSVAIILFIILFFFL. Residues 260 to 375 are Cytoplasmic-facing; sequence LHCCCSNKKN…ASSHVPAAGI (116 aa). The tract at residues 334–375 is disordered; the sequence is AKPRSLSPAHKHHSQALRGSSRETTALSQNRVASSHVPAAGI. Residues 355–366 show a composition bias toward polar residues; the sequence is RETTALSQNRVA.

The protein belongs to the immunoglobulin superfamily.

The protein localises to the cell membrane. In terms of biological role, receptor on natural killer (NK) cells for HLA-C alleles. Inhibits the activity of NK cells thus preventing cell lysis. The chain is Killer cell immunoglobulin-like receptor 2DL5A (KIR2DL5A) from Homo sapiens (Human).